A 286-amino-acid polypeptide reads, in one-letter code: Ribosomal RNA small subunit methyltransferase A (286 aa).

Residues Asn31, Ile33, Gly58, Glu80, Asp106, and Asn125 each contribute to the S-adenosyl-L-methionine site.

It belongs to the class I-like SAM-binding methyltransferase superfamily. rRNA adenine N(6)-methyltransferase family. RsmA subfamily.

Its subcellular location is the cytoplasm. It catalyses the reaction adenosine(1518)/adenosine(1519) in 16S rRNA + 4 S-adenosyl-L-methionine = N(6)-dimethyladenosine(1518)/N(6)-dimethyladenosine(1519) in 16S rRNA + 4 S-adenosyl-L-homocysteine + 4 H(+). Functionally, specifically dimethylates two adjacent adenosines (A1518 and A1519) in the loop of a conserved hairpin near the 3'-end of 16S rRNA in the 30S particle. May play a critical role in biogenesis of 30S subunits. The polypeptide is Ribosomal RNA small subunit methyltransferase A (Wolbachia pipientis wMel).